Here is a 176-residue protein sequence, read N- to C-terminus: MRAYWFDNKEGDQRELHDSGRDVDPEYLEKLGVLYYHFADEKDVDKLASDRSYKNRDVITVSPQKMGDVYEEKVKMFFNEHLHEDEEIRYIRDGAGFFDVRSEGDEWVRIRLEKDDLIILPAGIYHRFTTDDKNYIQAMRLFKEEPKWTPLNRGPEVDANPYRKEYLQTVPAIASQ.

Residues histidine 81, histidine 83, glutamate 87, and histidine 126 each coordinate Fe(2+). Residues histidine 81, histidine 83, glutamate 87, and histidine 126 each contribute to the Ni(2+) site.

The protein belongs to the acireductone dioxygenase (ARD) family. Fe(2+) is required as a cofactor. The cofactor is Ni(2+).

It is found in the cytoplasm. It localises to the nucleus. The enzyme catalyses 1,2-dihydroxy-5-(methylsulfanyl)pent-1-en-3-one + O2 = 4-methylsulfanyl-2-oxobutanoate + formate + 2 H(+). It carries out the reaction 1,2-dihydroxy-5-(methylsulfanyl)pent-1-en-3-one + O2 = 3-(methylsulfanyl)propanoate + CO + formate + 2 H(+). Its pathway is amino-acid biosynthesis; L-methionine biosynthesis via salvage pathway; L-methionine from S-methyl-5-thio-alpha-D-ribose 1-phosphate: step 5/6. Catalyzes 2 different reactions between oxygen and the acireductone 1,2-dihydroxy-3-keto-5-methylthiopentene (DHK-MTPene) depending upon the metal bound in the active site. Fe-containing acireductone dioxygenase (Fe-ARD) produces formate and 2-keto-4-methylthiobutyrate (KMTB), the alpha-ketoacid precursor of methionine in the methionine recycle pathway. Ni-containing acireductone dioxygenase (Ni-ARD) produces methylthiopropionate, carbon monoxide and formate, and does not lie on the methionine recycle pathway. This chain is Acireductone dioxygenase (adi1), found in Sclerotinia sclerotiorum (strain ATCC 18683 / 1980 / Ss-1) (White mold).